The following is a 310-amino-acid chain: HPr kinase/phosphorylase (310 aa).

Active-site residues include His138 and Lys159. 153–160 (GASGIGKS) is an ATP binding site. A Mg(2+)-binding site is contributed by Ser160. The active-site Proton acceptor; for phosphorylation activity. Proton donor; for dephosphorylation activity is the Asp177. The interval 201–210 (IEIRGVGIID) is important for the catalytic mechanism of both phosphorylation and dephosphorylation. Glu202 lines the Mg(2+) pocket. Residue Arg243 is part of the active site. Positions 264–269 (PVKTGR) are important for the catalytic mechanism of dephosphorylation.

The protein belongs to the HPrK/P family. Homohexamer. Mg(2+) is required as a cofactor.

It catalyses the reaction [HPr protein]-L-serine + ATP = [HPr protein]-O-phospho-L-serine + ADP + H(+). It carries out the reaction [HPr protein]-O-phospho-L-serine + phosphate + H(+) = [HPr protein]-L-serine + diphosphate. Functionally, catalyzes the ATP- as well as the pyrophosphate-dependent phosphorylation of a specific serine residue in HPr, a phosphocarrier protein of the phosphoenolpyruvate-dependent sugar phosphotransferase system (PTS). HprK/P also catalyzes the pyrophosphate-producing, inorganic phosphate-dependent dephosphorylation (phosphorolysis) of seryl-phosphorylated HPr (P-Ser-HPr). The two antagonistic activities of HprK/P are regulated by several intracellular metabolites, which change their concentration in response to the absence or presence of rapidly metabolisable carbon sources (glucose, fructose, etc.) in the growth medium. Therefore, by controlling the phosphorylation state of HPr, HPrK/P is a sensor enzyme that plays a major role in the regulation of carbon metabolism and sugar transport: it mediates carbon catabolite repression (CCR), and regulates PTS-catalyzed carbohydrate uptake and inducer exclusion. In Lactococcus lactis subsp. cremoris (strain SK11), this protein is HPr kinase/phosphorylase.